A 445-amino-acid chain; its full sequence is MSPNSTLWQTILQDLEKLYNEETYNELFLPVTSTFKDQNGLLTMVVANEFLKNRINKLYIAKINELATKYSSTPVRLKFVSQEEVIEEPVADRKLTIDYRQGNLNSTYTFDSFVVGKSNMFAFRMAMKVADHPGAVANPFYIFGDVGLGKTHLMQAIGNYILDNDVEKRILYVKADNFIEDFVSLLSRNKNKTEEFNAKYKDIDVILVDDIQIMANASKTQMEFFKLFDYLYLNNKQIVITSDKPASQLTNIMPRLTTRFEAGLSVDIQIPELEHRISILKRKTATLDANLEVSEDILTFIASQFAANIREMEGALIRLISYAQTFNLEITMNVVEEALGAVLKTKKKTNDLNENNYDKIQSIVADYFQVSLPDLIGKKRHAKFTLPRHIAMYLIKLKYNIPYKTIGSLFNDRDHSTVLSACEKVERDMRMDSNLKFAVDSIVKK.

The interval M1 to T73 is domain I, interacts with DnaA modulators. The segment at T73–G102 is domain II. Positions N103–A323 are domain III, AAA+ region. 4 residues coordinate ATP: G147, G149, K150, and T151. Residues Q324–K445 are domain IV, binds dsDNA.

The protein belongs to the DnaA family. In terms of assembly, oligomerizes as a right-handed, spiral filament on DNA at oriC.

It is found in the cytoplasm. Plays an essential role in the initiation and regulation of chromosomal replication. ATP-DnaA binds to the origin of replication (oriC) to initiate formation of the DNA replication initiation complex once per cell cycle. Binds the DnaA box (a 9 base pair repeat at the origin) and separates the double-stranded (ds)DNA. Forms a right-handed helical filament on oriC DNA; dsDNA binds to the exterior of the filament while single-stranded (ss)DNA is stabiized in the filament's interior. The ATP-DnaA-oriC complex binds and stabilizes one strand of the AT-rich DNA unwinding element (DUE), permitting loading of DNA polymerase. After initiation quickly degrades to an ADP-DnaA complex that is not apt for DNA replication. Binds acidic phospholipids. This Acholeplasma laidlawii protein is Chromosomal replication initiator protein DnaA.